The primary structure comprises 495 residues: Cysteine--tRNA ligase (495 aa).

Zn(2+) is bound at residue C29. A 'HIGH' region motif is present at residues 31–41; that stretch reads VTVYDDSHVGH. Zn(2+) is bound by residues C209, H234, and E238. The 'KMSKS' region signature appears at 266 to 270; it reads KMSKS. K269 is an ATP binding site.

Belongs to the class-I aminoacyl-tRNA synthetase family. As to quaternary structure, monomer. It depends on Zn(2+) as a cofactor.

It is found in the cytoplasm. The enzyme catalyses tRNA(Cys) + L-cysteine + ATP = L-cysteinyl-tRNA(Cys) + AMP + diphosphate. The sequence is that of Cysteine--tRNA ligase (cysS) from Aquifex aeolicus (strain VF5).